The following is a 508-amino-acid chain: Adenylosuccinate synthetase 1, chloroplastic (508 aa).

The N-terminal 56 residues, 1–56, are a transit peptide targeting the chloroplast; sequence MNISILRLDSNPITTATSPATATANHRSGILGCYNGTYSCRLNQLQQRKKNPSIIV. Residues 95–101 and 123–125 each bind GTP; these read GDEGKGK and GHT. The active-site Proton acceptor is Asp96. Mg(2+)-binding residues include Asp96 and Gly123. Residues 96 to 99, 121 to 124, Thr213, Arg227, Gln307, Thr322, and Arg386 contribute to the IMP site; these read DEGK and NAGH. The active-site Proton donor is the His124. 382 to 388 serves as a coordination point for substrate; the sequence is TTTGRPR. Residues Arg388, 414–416, and 497–499 each bind GTP; these read KLD and GIG.

Belongs to the adenylosuccinate synthetase family. In terms of assembly, homodimer. Requires Mg(2+) as cofactor.

The protein resides in the plastid. It is found in the chloroplast. The enzyme catalyses IMP + L-aspartate + GTP = N(6)-(1,2-dicarboxyethyl)-AMP + GDP + phosphate + 2 H(+). It functions in the pathway purine metabolism; AMP biosynthesis via de novo pathway; AMP from IMP: step 1/2. Functionally, plays an important role in the de novo pathway and in the salvage pathway of purine nucleotide biosynthesis. Catalyzes the first committed step in the biosynthesis of AMP from IMP. The sequence is that of Adenylosuccinate synthetase 1, chloroplastic from Capsicum frutescens (Cayenne pepper).